Here is a 119-residue protein sequence, read N- to C-terminus: Protein TusC (119 aa).

The protein belongs to the DsrF/TusC family. As to quaternary structure, heterohexamer, formed by a dimer of trimers. The hexameric TusBCD complex contains 2 copies each of TusB, TusC and TusD. The TusBCD complex interacts with TusE.

Its subcellular location is the cytoplasm. Its function is as follows. Part of a sulfur-relay system required for 2-thiolation of 5-methylaminomethyl-2-thiouridine (mnm(5)s(2)U) at tRNA wobble positions. In Klebsiella pneumoniae (strain 342), this protein is Protein TusC.